Here is a 254-residue protein sequence, read N- to C-terminus: MSPFSSAFRPRRIAISALLLAIGALASGCSSIDRLSQIGEQPKLSAIDNPTAQPGYKPVQMPMPKPEVASYNPNSLWRSGSRAFFKDQRAHQIGDLLTVTVNITDKANIANETQRSRTAKEDSGITDFIGSQTVTQPLKVLPGRLLTTDSTSSADGKGSVNRQEALQTNVAAVVTQVLPNGNLVVEGKQEIRVNYEIRELVVAGIVRPEDIQSDNTIDSSKIAQARIAYGGRGQIMDVQQPRYGQQVMDVLLPF.

Positions 1-26 (MSPFSSAFRPRRIAISALLLAIGALA) are cleaved as a signal peptide.

It belongs to the FlgH family. The basal body constitutes a major portion of the flagellar organelle and consists of four rings (L,P,S, and M) mounted on a central rod.

The protein resides in the cell outer membrane. It is found in the bacterial flagellum basal body. In terms of biological role, assembles around the rod to form the L-ring and probably protects the motor/basal body from shearing forces during rotation. This chain is Flagellar L-ring protein 1 (flgH1), found in Bradyrhizobium diazoefficiens (strain JCM 10833 / BCRC 13528 / IAM 13628 / NBRC 14792 / USDA 110).